A 427-amino-acid polypeptide reads, in one-letter code: Gamma-glutamyl phosphate reductase (427 aa).

It belongs to the gamma-glutamyl phosphate reductase family.

It is found in the cytoplasm. It carries out the reaction L-glutamate 5-semialdehyde + phosphate + NADP(+) = L-glutamyl 5-phosphate + NADPH + H(+). Its pathway is amino-acid biosynthesis; L-proline biosynthesis; L-glutamate 5-semialdehyde from L-glutamate: step 2/2. Functionally, catalyzes the NADPH-dependent reduction of L-glutamate 5-phosphate into L-glutamate 5-semialdehyde and phosphate. The product spontaneously undergoes cyclization to form 1-pyrroline-5-carboxylate. The chain is Gamma-glutamyl phosphate reductase from Gluconobacter oxydans (strain 621H) (Gluconobacter suboxydans).